A 249-amino-acid polypeptide reads, in one-letter code: tRNA (guanine-N(1)-)-methyltransferase (249 aa).

S-adenosyl-L-methionine is bound by residues Gly113 and 133–138 (IGDFVL).

It belongs to the RNA methyltransferase TrmD family. Homodimer.

It is found in the cytoplasm. The enzyme catalyses guanosine(37) in tRNA + S-adenosyl-L-methionine = N(1)-methylguanosine(37) in tRNA + S-adenosyl-L-homocysteine + H(+). Specifically methylates guanosine-37 in various tRNAs. The protein is tRNA (guanine-N(1)-)-methyltransferase of Photobacterium profundum (strain SS9).